A 174-amino-acid chain; its full sequence is ATP synthase subunit delta (174 aa).

It belongs to the ATPase delta chain family. As to quaternary structure, F-type ATPases have 2 components, F(1) - the catalytic core - and F(0) - the membrane proton channel. F(1) has five subunits: alpha(3), beta(3), gamma(1), delta(1), epsilon(1). F(0) has three main subunits: a(1), b(2) and c(10-14). The alpha and beta chains form an alternating ring which encloses part of the gamma chain. F(1) is attached to F(0) by a central stalk formed by the gamma and epsilon chains, while a peripheral stalk is formed by the delta and b chains.

The protein resides in the cell inner membrane. F(1)F(0) ATP synthase produces ATP from ADP in the presence of a proton or sodium gradient. F-type ATPases consist of two structural domains, F(1) containing the extramembraneous catalytic core and F(0) containing the membrane proton channel, linked together by a central stalk and a peripheral stalk. During catalysis, ATP synthesis in the catalytic domain of F(1) is coupled via a rotary mechanism of the central stalk subunits to proton translocation. Its function is as follows. This protein is part of the stalk that links CF(0) to CF(1). It either transmits conformational changes from CF(0) to CF(1) or is implicated in proton conduction. The chain is ATP synthase subunit delta from Francisella philomiragia subsp. philomiragia (strain ATCC 25017 / CCUG 19701 / FSC 153 / O#319-036).